The sequence spans 251 residues: Triosephosphate isomerase (251 aa).

A substrate-binding site is contributed by 9–11; that stretch reads NWK. The active-site Electrophile is the H95. The active-site Proton acceptor is E167. Substrate is bound by residues G173, S212, and 233 to 234; that span reads GG.

The protein belongs to the triosephosphate isomerase family. As to quaternary structure, homodimer.

It is found in the cytoplasm. It catalyses the reaction D-glyceraldehyde 3-phosphate = dihydroxyacetone phosphate. It functions in the pathway carbohydrate biosynthesis; gluconeogenesis. It participates in carbohydrate degradation; glycolysis; D-glyceraldehyde 3-phosphate from glycerone phosphate: step 1/1. Functionally, involved in the gluconeogenesis. Catalyzes stereospecifically the conversion of dihydroxyacetone phosphate (DHAP) to D-glyceraldehyde-3-phosphate (G3P). This chain is Triosephosphate isomerase, found in Pseudomonas fluorescens (strain ATCC BAA-477 / NRRL B-23932 / Pf-5).